We begin with the raw amino-acid sequence, 507 residues long: Xaa-Pro aminopeptidase 3 (507 aa).

The N-terminal 31 residues, methionine 1–tyrosine 31, are a transit peptide targeting the mitochondrion. Positions histidine 54–leucine 79 are interaction with TNFRSF1B. Positions 300, 331, 342, 424, 431, 451, and 475 each coordinate substrate. Positions 331, 342, and 424 each coordinate Mn(2+). The Mn(2+) site is built by glutamate 451 and glutamate 475.

The protein belongs to the peptidase M24B family. In terms of assembly, homodimer. Isoform 1 interacts with TNFRSF1B/TNFR2 (activated) and TRAF2. Mn(2+) serves as cofactor. In terms of tissue distribution, isoform 1 and isoform 2 are widely expressed, with isoform 1 being more abundant.

Its subcellular location is the mitochondrion. It localises to the cytoplasm. It catalyses the reaction Release of any N-terminal amino acid, including proline, that is linked to proline, even from a dipeptide or tripeptide.. Its function is as follows. Catalyzes the removal of a penultimate prolyl residue from the N-termini of peptides, such as Leu-Pro-Ala. Also shows low activity towards peptides with Ala or Ser at the P1 position. In terms of biological role, promotes TNFRSF1B-mediated phosphorylation of MAPK8/JNK1 and MAPK9/JNK2, suggesting a function as an adapter protein for TNFRSF1B; the effect is independent of XPNPEP3 peptidase activity. May inhibit apoptotic cell death induced via TNF-TNFRSF1B signaling. This Homo sapiens (Human) protein is Xaa-Pro aminopeptidase 3 (XPNPEP3).